The following is an 841-amino-acid chain: Taste receptor type 1 member 1 (841 aa).

Positions 1–20 (MLLCTARLVGLQLLISCCWA) are cleaved as a signal peptide. At 21-567 (FACHSTESSP…VFLALREHTS (547 aa)) the chain is on the extracellular side. Residues asparagine 87, asparagine 88, asparagine 95, asparagine 291, asparagine 479, and asparagine 529 are each glycosylated (N-linked (GlcNAc...) asparagine). The chain crosses the membrane as a helical span at residues 568–588 (WVLLAANTLLLLLLLGTAGLF). Residues 589 to 603 (AWHLDTPVVRSAGGR) are Cytoplasmic-facing. The chain crosses the membrane as a helical span at residues 604–624 (LCFLMLGSLAAGSGSLYGFFG). At 625–639 (EPTRPACLLRQALFA) the chain is on the extracellular side. Residues 640–660 (LGFTIFLSCLTVRSFQLIIIF) traverse the membrane as a helical segment. Over 661–680 (KFSTKVPTFYHAWVQNHGAG) the chain is Cytoplasmic. The chain crosses the membrane as a helical span at residues 681-701 (LFVMISSAAQLLICLTWLVVW). Residues 702 to 725 (TPLPAREYQRFPHLVMLECTETNS) are Extracellular-facing. Residues 726–746 (LGFILAFLYNGLLSISAFACS) traverse the membrane as a helical segment. Residues 747–761 (YLGKDLPENYNEAKC) are Cytoplasmic-facing. A helical membrane pass occupies residues 762–782 (VTFSLLFNFVSWIAFFTTASV). Residues 783 to 795 (YDGKYLPAANMMA) lie on the Extracellular side of the membrane. A helical transmembrane segment spans residues 796–816 (GLSSLSSGFGGYFLPKCYVIL). Over 817-841 (CRPDLNSTEHFQASIQDYTRRCGST) the chain is Cytoplasmic.

It belongs to the G-protein coupled receptor 3 family. TAS1R subfamily. As to quaternary structure, forms heterodimers with TAS1R3.

It is found in the cell membrane. Its function is as follows. Putative taste receptor. TAS1R1/TAS1R3 responds to the umami taste stimulus (the taste of monosodium glutamate). Sequence differences within and between species can significantly influence the selectivity and specificity of taste responses. The chain is Taste receptor type 1 member 1 (TAS1R1) from Homo sapiens (Human).